The following is a 158-amino-acid chain: Putative peptidoglycan-binding-like protein (158 aa).

Positions 1 to 24 (MRSPKVKFLTIFTFCIFITKMSFA) are cleaved as a signal peptide.

Belongs to the IagB/IpgF/P19 family.

It localises to the periplasm. In Escherichia coli (strain K12), this protein is Putative peptidoglycan-binding-like protein (pbl).